A 153-amino-acid polypeptide reads, in one-letter code: D-aminoacyl-tRNA deacylase (153 aa).

The Gly-cisPro motif, important for rejection of L-amino acids signature appears at 137–138; it reads GP.

Belongs to the DTD family. In terms of assembly, homodimer.

It is found in the cytoplasm. The catalysed reaction is glycyl-tRNA(Ala) + H2O = tRNA(Ala) + glycine + H(+). The enzyme catalyses a D-aminoacyl-tRNA + H2O = a tRNA + a D-alpha-amino acid + H(+). In terms of biological role, an aminoacyl-tRNA editing enzyme that deacylates mischarged D-aminoacyl-tRNAs. Also deacylates mischarged glycyl-tRNA(Ala), protecting cells against glycine mischarging by AlaRS. Acts via tRNA-based rather than protein-based catalysis; rejects L-amino acids rather than detecting D-amino acids in the active site. By recycling D-aminoacyl-tRNA to D-amino acids and free tRNA molecules, this enzyme counteracts the toxicity associated with the formation of D-aminoacyl-tRNA entities in vivo and helps enforce protein L-homochirality. The sequence is that of D-aminoacyl-tRNA deacylase from Dehalococcoides mccartyi (strain ATCC BAA-2100 / JCM 16839 / KCTC 5957 / BAV1).